The sequence spans 199 residues: Probable molybdenum cofactor guanylyltransferase (199 aa).

Residues 6 to 8 (LAG), Lys-18, Asp-65, and Asp-97 contribute to the GTP site. Asp-97 contacts Mg(2+).

This sequence belongs to the MobA family. Requires Mg(2+) as cofactor.

Its subcellular location is the cytoplasm. The enzyme catalyses Mo-molybdopterin + GTP + H(+) = Mo-molybdopterin guanine dinucleotide + diphosphate. Functionally, transfers a GMP moiety from GTP to Mo-molybdopterin (Mo-MPT) cofactor (Moco or molybdenum cofactor) to form Mo-molybdopterin guanine dinucleotide (Mo-MGD) cofactor. This chain is Probable molybdenum cofactor guanylyltransferase, found in Staphylococcus aureus (strain COL).